The chain runs to 436 residues: Transcriptional regulator dmxR14 (436 aa).

The segment covering 1–27 (MEEAETNTQVDSVPSNSVRSGAELSSK) has biased composition (polar residues). Positions 1–32 (MEEAETNTQVDSVPSNSVRSGAELSSKSKLRD) are disordered. The segment at residues 34-61 (CHACARSKVRCPKQKPSCSRCEARGTTC) is a DNA-binding region (zn(2)-C6 fungal-type). The tract at residues 67–136 (RRPGRRRETS…ITTVHNGPEN (70 aa)) is disordered. Polar residues predominate over residues 90–136 (SHANNRNSPSFSSTRSTLPSPIASDSNSNFTQPQNSSITTVHNGPEN).

It is found in the nucleus. Transcriptional regulator; part of the gene cluster that mediates the biosynthesis of the dimeric xanthones cryptosporioptides. In Cryptosporiopsis sp. (strain 8999), this protein is Transcriptional regulator dmxR14.